We begin with the raw amino-acid sequence, 624 residues long: Laccase-1 (624 aa).

An N-terminal signal peptide occupies residues 1 to 20 (MRGVVKLFFLSCSLVSLVSS). Plastocyanin-like domains lie at 69–183 (TKAL…HSPN) and 195–355 (DRIV…VVRY). Histidine 117, histidine 119, histidine 162, and histidine 164 together coordinate Cu cation. Cysteine 138 and cysteine 578 form a disulfide bridge. Residues asparagine 242, asparagine 320, and asparagine 430 are each glycosylated (N-linked (GlcNAc...) asparagine). Residues 469–562 (IIINNLDGVI…GKLAVVVIQP (94 aa)) enclose the Plastocyanin-like 3 domain. 3 residues coordinate Cu cation: histidine 480, histidine 483, and histidine 485. N-linked (GlcNAc...) asparagine glycosylation is present at asparagine 503. Cu cation-binding residues include histidine 543, cysteine 544, histidine 545, and histidine 549. Residues 582 to 603 (DPNAFGPARRSPSPSIQSSKTS) form a disordered region. The span at 592-603 (SPSPSIQSSKTS) shows a compositional bias: low complexity.

This sequence belongs to the multicopper oxidase family. Cu cation serves as cofactor.

Its subcellular location is the secreted. The protein resides in the cell wall. It catalyses the reaction 4 hydroquinone + O2 = 4 benzosemiquinone + 2 H2O. Laccase that catalyzes the oxidation of certain aromatic compounds, including L-dopa, to quinones, which then polymerize to melanin. Able to oxidize a wide variety of aromatic diphenol and diamino groups in the ortho, meta, and para positions but not monophenolic groups such as in phenol, tyramine, or tyrosine. Plays an important role in virulence. Plays a role in dissemination to extrapulmonary sites but is not involved in pulmonary growth or in elicitation of cellular immune responses in the lung. This Cryptococcus neoformans var. grubii serotype A (strain H99 / ATCC 208821 / CBS 10515 / FGSC 9487) (Filobasidiella neoformans var. grubii) protein is Laccase-1 (LAC1).